Consider the following 275-residue polypeptide: 3-methyl-2-oxobutanoate hydroxymethyltransferase (275 aa).

Residues aspartate 44 and aspartate 83 each contribute to the Mg(2+) site. 3-methyl-2-oxobutanoate-binding positions include 44-45 (DS), aspartate 83, and lysine 113. A Mg(2+)-binding site is contributed by glutamate 115. The active-site Proton acceptor is glutamate 182.

This sequence belongs to the PanB family. Homodecamer; pentamer of dimers. Requires Mg(2+) as cofactor.

Its subcellular location is the cytoplasm. The catalysed reaction is 3-methyl-2-oxobutanoate + (6R)-5,10-methylene-5,6,7,8-tetrahydrofolate + H2O = 2-dehydropantoate + (6S)-5,6,7,8-tetrahydrofolate. It participates in cofactor biosynthesis; (R)-pantothenate biosynthesis; (R)-pantoate from 3-methyl-2-oxobutanoate: step 1/2. Functionally, catalyzes the reversible reaction in which hydroxymethyl group from 5,10-methylenetetrahydrofolate is transferred onto alpha-ketoisovalerate to form ketopantoate. In Clostridium beijerinckii (strain ATCC 51743 / NCIMB 8052) (Clostridium acetobutylicum), this protein is 3-methyl-2-oxobutanoate hydroxymethyltransferase.